We begin with the raw amino-acid sequence, 490 residues long: Dual specificity protein kinase CLK3 (490 aa).

The segment at 1–138 is disordered; the sequence is MHHCKRYRSP…SKRSSRSVED (138 aa). Residue Tyr7 is modified to Phosphotyrosine. Ser9, Ser49, Ser51, Ser67, Ser76, and Ser78 each carry phosphoserine. Composition is skewed to basic and acidic residues over residues 26 to 56 and 63 to 76; these read YSREHEGRLRYPSRREPPPRRSRSRSHDRIP and EHRDSDTYRCEERS. The span at 88 to 116 shows a compositional bias: basic residues; it reads RSRHRRRSRERAPYRTRKHAHHCHKRRTR. Low complexity predominate over residues 117 to 130; the sequence is SCSSASSRSQQSSK. Ser135 bears the Phosphoserine mark. Positions 156-472 constitute a Protein kinase domain; that stretch reads YEIVGNLGEG…LAEALLHPFF (317 aa). ATP is bound by residues 162–170 and Lys186; that span reads LGEGTFGKV. The active-site Proton acceptor is the Asp283.

Belongs to the protein kinase superfamily. CMGC Ser/Thr protein kinase family. Lammer subfamily. In terms of processing, autophosphorylates on all three types of residues. As to expression, present at high levels in testis and ovary. In testis, expression is restricted to elongated, maturing spermatozoa. Also present in spleen, brain, lung and liver (at protein level).

It localises to the nucleus. The protein localises to the cytoplasm. The protein resides in the cytoplasmic vesicle. Its subcellular location is the secretory vesicle. It is found in the acrosome. It carries out the reaction L-seryl-[protein] + ATP = O-phospho-L-seryl-[protein] + ADP + H(+). The enzyme catalyses L-threonyl-[protein] + ATP = O-phospho-L-threonyl-[protein] + ADP + H(+). The catalysed reaction is L-tyrosyl-[protein] + ATP = O-phospho-L-tyrosyl-[protein] + ADP + H(+). Its activity is regulated as follows. Leucettine L41 inhibits its kinase activity and affects the regulation of alternative splicing mediated by phosphorylation of SR proteins. Its function is as follows. Dual specificity kinase acting on both serine/threonine and tyrosine-containing substrates. Phosphorylates serine- and arginine-rich (SR) proteins of the spliceosomal complex. May be a constituent of a network of regulatory mechanisms that enable SR proteins to control RNA splicing and can cause redistribution of SR proteins from speckles to a diffuse nucleoplasmic distribution. Phosphorylates SRSF1 and SRSF3. Regulates the alternative splicing of tissue factor (F3) pre-mRNA in endothelial cells. The chain is Dual specificity protein kinase CLK3 from Mus musculus (Mouse).